Here is a 458-residue protein sequence, read N- to C-terminus: Protein amnionless (458 aa).

An N-terminal signal peptide occupies residues 1–19; that stretch reads MGALGRALLWLQLCALARA. Over 20 to 366 the chain is Extracellular; it reads AYKLWVPTTD…LGSGSRAGLA (347 aa). Residue asparagine 35 is glycosylated (N-linked (GlcNAc...) asparagine). Intrachain disulfides connect cysteine 43–cysteine 96, cysteine 137–cysteine 213, cysteine 205–cysteine 211, cysteine 223–cysteine 249, cysteine 234–cysteine 250, and cysteine 239–cysteine 253. The tract at residues 67 to 87 is interaction with CUBN; it reads SDMLLPRDGEFVLASGAGFGA. The VWFC domain maps to 203-254; it reads GACADPSGCVCGDAEVQPWICAALLQPLGGRCPPAACPDALRPEGQCCDLCG. The chain crosses the membrane as a helical span at residues 367-387; sequence GGVAAGLLLLLLALAAGLLLL. The Cytoplasmic segment spans residues 388 to 458; that stretch reads RRAPRLRWTK…VNPLFAEAEA (71 aa). The disordered stretch occupies residues 422–446; sequence SVGPVPRTPQPPPAQQAGSSSTSRS.

In terms of assembly, interacts (via extracellular region) with CUBN/cubilin. This gives rise to a huge complex containing one AMN chain and three CUBN chains. In terms of processing, N-glycosylated. A soluble form arises by proteolytic removal of the membrane anchor. Detected in kidney (at protein level). Detected in kidney and ileum.

It localises to the apical cell membrane. It is found in the cell membrane. The protein localises to the endosome membrane. The protein resides in the membrane. Its subcellular location is the coated pit. It localises to the secreted. Membrane-bound component of the endocytic receptor formed by AMN and CUBN. Required for normal CUBN glycosylation and trafficking to the cell surface. The complex formed by AMN and CUBN is required for efficient absorption of vitamin B12. Required for normal CUBN-mediated protein transport in the kidney. This Canis lupus familiaris (Dog) protein is Protein amnionless (AMN).